The following is a 228-amino-acid chain: Phosphatidylserine decarboxylase proenzyme (228 aa).

The active-site Schiff-base intermediate with substrate; via pyruvic acid is S197. Position 197 is a pyruvic acid (Ser); by autocatalysis (S197).

The protein belongs to the phosphatidylserine decarboxylase family. PSD-A subfamily. As to quaternary structure, heterodimer of a large membrane-associated beta subunit and a small pyruvoyl-containing alpha subunit. Pyruvate serves as cofactor. In terms of processing, is synthesized initially as an inactive proenzyme. Formation of the active enzyme involves a self-maturation process in which the active site pyruvoyl group is generated from an internal serine residue via an autocatalytic post-translational modification. Two non-identical subunits are generated from the proenzyme in this reaction, and the pyruvate is formed at the N-terminus of the alpha chain, which is derived from the carboxyl end of the proenzyme. The post-translation cleavage follows an unusual pathway, termed non-hydrolytic serinolysis, in which the side chain hydroxyl group of the serine supplies its oxygen atom to form the C-terminus of the beta chain, while the remainder of the serine residue undergoes an oxidative deamination to produce ammonia and the pyruvoyl prosthetic group on the alpha chain.

It is found in the cell membrane. The catalysed reaction is a 1,2-diacyl-sn-glycero-3-phospho-L-serine + H(+) = a 1,2-diacyl-sn-glycero-3-phosphoethanolamine + CO2. Its pathway is phospholipid metabolism; phosphatidylethanolamine biosynthesis; phosphatidylethanolamine from CDP-diacylglycerol: step 2/2. Its function is as follows. Catalyzes the formation of phosphatidylethanolamine (PtdEtn) from phosphatidylserine (PtdSer). This chain is Phosphatidylserine decarboxylase proenzyme, found in Bacteroides fragilis (strain ATCC 25285 / DSM 2151 / CCUG 4856 / JCM 11019 / LMG 10263 / NCTC 9343 / Onslow / VPI 2553 / EN-2).